A 186-amino-acid chain; its full sequence is MSDALDEGLVQRIDARGTIEWSETCYRYTGAHRDALSGEGARRFGGRWNPPLLFPAIYLADSAQACMVEVERAAQAASTTAEKMLEAAYRLHTIDVTDLAVLDLTTPQAREAVGLENDDIYGDDWSGCQAVGHAAWFLHMQGVLVPAAGGVGLVVTAYEQRTRPGQLQLRQSVDLTPALYQELRAT.

It belongs to the MbcT/ParT/Res family. In terms of assembly, forms a heterotetramer with cognate antitoxin MbcA.

It carries out the reaction phosphate + NAD(+) = ADP-alpha-D-ribose 1''-phosphate + nicotinamide + H(+). Its function is as follows. Toxic component of a type II toxin-antitoxin (TA) system. Degrades NAD(+) by phosphorolysis. Neutralized by its cognate antitoxin MbcA. The chain is NAD(+) phosphorylase MbcT (mbcT) from Mycobacterium bovis (strain ATCC BAA-935 / AF2122/97).